Consider the following 302-residue polypeptide: Homoserine O-acetyltransferase (302 aa).

The Acyl-thioester intermediate role is filled by C142. The substrate site is built by K163 and S192. Residue H235 is the Proton acceptor of the active site. The active site involves E237. R249 contacts substrate.

This sequence belongs to the MetA family.

The protein resides in the cytoplasm. It carries out the reaction L-homoserine + acetyl-CoA = O-acetyl-L-homoserine + CoA. It participates in amino-acid biosynthesis; L-methionine biosynthesis via de novo pathway; O-acetyl-L-homoserine from L-homoserine: step 1/1. Transfers an acetyl group from acetyl-CoA to L-homoserine, forming acetyl-L-homoserine. This chain is Homoserine O-acetyltransferase, found in Clostridium novyi (strain NT).